We begin with the raw amino-acid sequence, 136 residues long: Large ribosomal subunit protein uL16 (136 aa).

Belongs to the universal ribosomal protein uL16 family. Part of the 50S ribosomal subunit.

Its function is as follows. Binds 23S rRNA and is also seen to make contacts with the A and possibly P site tRNAs. The sequence is that of Large ribosomal subunit protein uL16 from Rickettsia massiliae (strain Mtu5).